The following is a 619-amino-acid chain: N-acetylmuramoyl-L-alanine amidase domain-containing protein SAOUHSC_02979 (619 aa).

The first 27 residues, 1-27 (MPKNKILIYLLSTTLVLPTLVSPTAYA), serve as a signal peptide directing secretion. Disordered regions lie at residues 25-83 (AYAD…TIDD), 134-226 (SDYE…SMSD), and 238-290 (EDAK…NQKD). Basic and acidic residues-rich tracts occupy residues 30 to 65 (PQKD…KADK), 73 to 82 (NNDKKFKTID), and 137 to 146 (EQPRNGEKST). Residues 147–156 (NDSNKNSDNS) are compositionally biased toward low complexity. Residues 157–175 (IKNDTDTQSSKQDKADNQK) show a composition bias toward basic and acidic residues. Polar residues predominate over residues 176–192 (APKSNNTKPSTSNKQPN). Residues 214–226 (QKSSSKDNQSMSD) show a composition bias toward low complexity. A compositionally biased stretch (basic and acidic residues) spans 238-260 (EDAKKTQKDYASQSKKDKNEKSN). An N-acetylmuramoyl-L-alanine amidase region spans residues 327 to 468 (IAKDAHRIGQ…LNSIIKHYQL (142 aa)). The 130-residue stretch at 488-617 (DYDDSSDEFK…AAAEELSYIT (130 aa)) folds into the Peptidase C51 domain.

This sequence in the N-terminal section; belongs to the N-acetylmuramoyl-L-alanine amidase 2 family.

It localises to the secreted. The protein is N-acetylmuramoyl-L-alanine amidase domain-containing protein SAOUHSC_02979 of Staphylococcus aureus (strain NCTC 8325 / PS 47).